The primary structure comprises 554 residues: Dihydroxy-acid dehydratase (554 aa).

Cys51 contacts [2Fe-2S] cluster. Mg(2+) is bound at residue Asp83. Residue Cys124 coordinates [2Fe-2S] cluster. The Mg(2+) site is built by Asp125 and Lys126. N6-carboxylysine is present on Lys126. Cys193 is a [2Fe-2S] cluster binding site. Glu444 contacts Mg(2+). Residue Ser470 is the Proton acceptor of the active site.

Belongs to the IlvD/Edd family. As to quaternary structure, homodimer. [2Fe-2S] cluster is required as a cofactor. It depends on Mg(2+) as a cofactor.

It catalyses the reaction (2R)-2,3-dihydroxy-3-methylbutanoate = 3-methyl-2-oxobutanoate + H2O. The enzyme catalyses (2R,3R)-2,3-dihydroxy-3-methylpentanoate = (S)-3-methyl-2-oxopentanoate + H2O. It functions in the pathway amino-acid biosynthesis; L-isoleucine biosynthesis; L-isoleucine from 2-oxobutanoate: step 3/4. It participates in amino-acid biosynthesis; L-valine biosynthesis; L-valine from pyruvate: step 3/4. Functionally, functions in the biosynthesis of branched-chain amino acids. Catalyzes the dehydration of (2R,3R)-2,3-dihydroxy-3-methylpentanoate (2,3-dihydroxy-3-methylvalerate) into 2-oxo-3-methylpentanoate (2-oxo-3-methylvalerate) and of (2R)-2,3-dihydroxy-3-methylbutanoate (2,3-dihydroxyisovalerate) into 2-oxo-3-methylbutanoate (2-oxoisovalerate), the penultimate precursor to L-isoleucine and L-valine, respectively. This chain is Dihydroxy-acid dehydratase, found in Vesicomyosocius okutanii subsp. Calyptogena okutanii (strain HA).